Reading from the N-terminus, the 293-residue chain is N-acetylneuraminate lyase (293 aa).

Aceneuramate is bound by residues Ser-48 and Ser-49. Tyr-137 functions as the Proton donor in the catalytic mechanism. Lys-165 acts as the Schiff-base intermediate with substrate in catalysis. The aceneuramate site is built by Thr-167, Gly-189, Asp-191, Glu-192, and Ser-208.

It belongs to the DapA family. NanA subfamily. In terms of assembly, homotetramer.

The protein localises to the cytoplasm. The enzyme catalyses aceneuramate = aldehydo-N-acetyl-D-mannosamine + pyruvate. The protein operates within amino-sugar metabolism; N-acetylneuraminate degradation; D-fructose 6-phosphate from N-acetylneuraminate: step 1/5. In terms of biological role, catalyzes the reversible aldol cleavage of N-acetylneuraminic acid (sialic acid; Neu5Ac) to form pyruvate and N-acetylmannosamine (ManNAc) via a Schiff base intermediate. The polypeptide is N-acetylneuraminate lyase (Staphylococcus aureus (strain bovine RF122 / ET3-1)).